The following is a 517-amino-acid chain: Apolipoprotein N-acyltransferase (517 aa).

Transmembrane regions (helical) follow at residues Ser-5–Thr-25, Phe-26–Leu-46, Gly-55–Val-75, Phe-90–Phe-110, Val-128–Trp-148, Ala-162–Val-182, and Leu-193–Val-213. A CN hydrolase domain is found at Ile-225–Pro-471. The Proton acceptor role is filled by Glu-264. Lys-330 is an active-site residue. The active-site Nucleophile is Cys-382.

Belongs to the CN hydrolase family. Apolipoprotein N-acyltransferase subfamily.

Its subcellular location is the cell inner membrane. The enzyme catalyses N-terminal S-1,2-diacyl-sn-glyceryl-L-cysteinyl-[lipoprotein] + a glycerophospholipid = N-acyl-S-1,2-diacyl-sn-glyceryl-L-cysteinyl-[lipoprotein] + a 2-acyl-sn-glycero-3-phospholipid + H(+). The protein operates within protein modification; lipoprotein biosynthesis (N-acyl transfer). In terms of biological role, catalyzes the phospholipid dependent N-acylation of the N-terminal cysteine of apolipoprotein, the last step in lipoprotein maturation. This is Apolipoprotein N-acyltransferase from Photobacterium profundum (strain SS9).